The chain runs to 72 residues: ATP synthase subunit c (72 aa).

The next 2 membrane-spanning stretches (helical) occupy residues 1-21 and 48-68; these read MSLG…GAGI and MFIG…FSFI.

The protein belongs to the ATPase C chain family. In terms of assembly, F-type ATPases have 2 components, F(1) - the catalytic core - and F(0) - the membrane proton channel. F(1) has five subunits: alpha(3), beta(3), gamma(1), delta(1), epsilon(1). F(0) has three main subunits: a(1), b(2) and c(10-14). The alpha and beta chains form an alternating ring which encloses part of the gamma chain. F(1) is attached to F(0) by a central stalk formed by the gamma and epsilon chains, while a peripheral stalk is formed by the delta and b chains.

The protein localises to the cell membrane. F(1)F(0) ATP synthase produces ATP from ADP in the presence of a proton or sodium gradient. F-type ATPases consist of two structural domains, F(1) containing the extramembraneous catalytic core and F(0) containing the membrane proton channel, linked together by a central stalk and a peripheral stalk. During catalysis, ATP synthesis in the catalytic domain of F(1) is coupled via a rotary mechanism of the central stalk subunits to proton translocation. Its function is as follows. Key component of the F(0) channel; it plays a direct role in translocation across the membrane. A homomeric c-ring of between 10-14 subunits forms the central stalk rotor element with the F(1) delta and epsilon subunits. The sequence is that of ATP synthase subunit c from Geobacillus stearothermophilus (Bacillus stearothermophilus).